The following is a 1484-amino-acid chain: Cystic fibrosis transmembrane conductance regulator (1484 aa).

Residues 1–77 (MQRSPLERAN…KLINALRRCF (77 aa)) lie on the Cytoplasmic side of the membrane. A helical transmembrane segment spans residues 78–98 (FWRFMFYGLLLYLGEVTKAVQ). Residues 81–365 (FMFYGLLLYL…WAVQMWYDSI (285 aa)) enclose the ABC transmembrane type-1 1 domain. Residues 99–122 (PLLLGRIIASYDPDNAHERSIAYY) are Extracellular-facing. A helical membrane pass occupies residues 123 to 146 (LGIGLCLLFIVRTLLLHPAVFGLH). Residues 147–195 (HIGMQMRIALFSLIYKKTLKLSSRVLDKISTGQLVSLLSNNLNKFDEGL) lie on the Cytoplasmic side of the membrane. The helical transmembrane segment at 196 to 216 (ALAHFVWIAPLQVMLLMGLLW) threads the bilayer. Topologically, residues 217–222 (DLLQAS) are extracellular. The helical transmembrane segment at 223–243 (AFCGLAVLVVLVLFQAWLGHR) threads the bilayer. At 244 to 298 (MMKYRDRRAGKINERLVITAEIIENIQSVKAYCWEEAMENMIESLRETELKLTRK) the chain is on the cytoplasmic side. Residues 299 to 319 (AAYMRYFNSSAFFFSGFFVVF) traverse the membrane as a helical segment. Residues 320–339 (LSVLPSMLTKGIVLRKIFTT) are Extracellular-facing. The chain crosses the membrane as a helical span at residues 340–358 (ISFCIVLRMAVTRQFPWAV). The Cytoplasmic segment spans residues 359–859 (QMWYDSIGAI…YLRYMTIHKK (501 aa)). ATP is bound by residues Trp401, Ser434, 458–465 (GSTGAGKT), and Gln493. An ABC transporter 1 domain is found at 423-646 (SDDKNLIFSN…RPDFSSKLMG (224 aa)). A lipid anchor (S-palmitoyl cysteine) is attached at Cys524. Ser549 and Ser660 each carry phosphoserine. The segment at 654–832 (SAERRNSILT…EEINEEDLKE (179 aa)) is disordered R region. Ser670 is subject to Phosphoserine; by PKA. Phosphoserine is present on Ser686. Lys688 participates in a covalent cross-link: Glycyl lysine isopeptide (Lys-Gly) (interchain with G-Cter in ubiquitin). 7 positions are modified to phosphoserine: Ser700, Ser712, Ser737, Ser768, Ser791, Ser796, and Ser814. A helical membrane pass occupies residues 860 to 880 (LIFVLMMCLVIFLIEVAASLV). Residues 860–1159 (LIFVLMMCLV…AVNASIDVDS (300 aa)) form the ABC transmembrane type-1 2 domain. Topologically, residues 881–922 (GLCLFKDGASRMNSTSNLNHTSTLDWFAVIVTNTSTYYMFYI) are extracellular. 3 N-linked (GlcNAc...) asparagine glycosylation sites follow: Asn893, Asn899, and Asn913. Residues 923–943 (YVGVADTLLALGFLRGLPLVH) form a discontinuously helical membrane-spanning segment. Residues 944–994 (SLISVSKILHQKMLHSVLQAPMSTFNTLKTGSILNRFSKDMAILDDLLPLT) lie on the Cytoplasmic side of the membrane. Residues 995–1015 (IFDFIQLLLIVIGAVTVVSAL) form a helical membrane-spanning segment. Over 1016 to 1017 (QP) the chain is Extracellular. The helical transmembrane segment at 1018-1038 (YIFLASVPVVIAFVLLRAYFL) threads the bilayer. The Cytoplasmic segment spans residues 1039–1099 (RTSQQLKQLE…TANWFLYLST (61 aa)). Residues 1100-1120 (LRWFQMRIEMVFVIFFILVTF) traverse the membrane as a helical segment. Topologically, residues 1121–1134 (ISILTTGDGEGKVG) are extracellular. The chain crosses the membrane as a helical span at residues 1135-1155 (IVLTLAMNIMGTLQWAVNASI). Over 1156–1484 (DVDSLMRSVS…TEEEVQDTRL (329 aa)) the chain is Cytoplasmic. The ABC transporter 2 domain maps to 1212 to 1445 (MTVQDLTAKY…KSVFKQAISH (234 aa)). Residues Tyr1221 and 1246-1253 (GRTGSGKS) contribute to the ATP site. The tract at residues 1388-1484 (KTLKQAFTNC…TEEEVQDTRL (97 aa)) is interaction with GORASP2. Cys1397 carries the S-palmitoyl cysteine lipid modification. Ser1446 and Ser1460 each carry phosphoserine. A disordered region spans residues 1463-1484 (LSRPKITALQEETEEEVQDTRL). Residues 1473 to 1484 (EETEEEVQDTRL) show a composition bias toward acidic residues. The PDZ-binding signature appears at 1482-1484 (TRL).

Belongs to the ABC transporter superfamily. ABCC family. CFTR transporter (TC 3.A.1.202) subfamily. As to quaternary structure, monomer; does not require oligomerization for channel activity. May form oligomers in the membrane. Interacts with SLC26A3, SLC26A6 and NHERF1. Interacts with SHANK2. Interacts with MYO6. Interacts (via C-terminus) with GOPC (via PDZ domain); this promotes CFTR internalization and thereby decreases channel activity. Interacts with SLC4A7 through NHERF1. Found in a complex with MYO5B and RAB11A. Interacts with ANO1. Interacts with SLC26A8. Interacts with AHCYL1; the interaction increases CFTR activity. Interacts with CSE1L. The core-glycosylated form interacts with GORASP2 (via PDZ GRASP-type 1 domain) in respone to ER stress. Interacts with MARCHF2; the interaction leads to CFTR ubiqtuitination and degradation. Interacts with ADGRG2. N-glycosylated. In terms of processing, phosphorylated; cAMP treatment promotes phosphorylation and activates the channel. Dephosphorylation decreases the ATPase activity (in vitro). Phosphorylation at PKA sites activates the channel. Phosphorylation at PKC sites enhances the response to phosphorylation by PKA. Phosphorylated by AMPK; this inhibits channel activity. Post-translationally, ubiquitinated, leading to its degradation in the lysosome. Deubiquitination by USP10 in early endosomes enhances its endocytic recycling to the cell membrane. Ubiquitinated by RNF185 during ER stress. Ubiquitinated by MARCHF2.

It localises to the apical cell membrane. The protein localises to the early endosome membrane. Its subcellular location is the cell membrane. It is found in the recycling endosome membrane. The protein resides in the endoplasmic reticulum membrane. It localises to the nucleus. It catalyses the reaction ATP + H2O + closed Cl(-) channel = ADP + phosphate + open Cl(-) channel.. The enzyme catalyses chloride(in) = chloride(out). The catalysed reaction is hydrogencarbonate(in) = hydrogencarbonate(out). It carries out the reaction ATP + H2O = ADP + phosphate + H(+). Epithelial ion channel that plays an important role in the regulation of epithelial ion and water transport and fluid homeostasis. Mediates the transport of chloride ions across the cell membrane. Possesses an intrinsic ATPase activity and utilizes ATP to gate its channel; the passive flow of anions through the channel is gated by cycles of ATP binding and hydrolysis by the ATP-binding domains. The ion channel is also permeable to HCO(3)(-); selectivity depends on the extracellular chloride concentration. Exerts its function also by modulating the activity of other ion channels and transporters. Contributes to the regulation of the pH and the ion content of the epithelial fluid layer. Modulates the activity of the epithelial sodium channel (ENaC) complex, in part by regulating the cell surface expression of the ENaC complex. May regulate bicarbonate secretion and salvage in epithelial cells by regulating the transporter SLC4A7. Can inhibit the chloride channel activity of ANO1. Plays a role in the chloride and bicarbonate homeostasis during sperm epididymal maturation and capacitation. The chain is Cystic fibrosis transmembrane conductance regulator from Ornithorhynchus anatinus (Duckbill platypus).